A 153-amino-acid chain; its full sequence is Superoxide dismutase [Cu-Zn] (153 aa).

Residues His45, His47, and His62 each coordinate Cu cation. Residues Cys56 and Cys145 are joined by a disulfide bond. The Zn(2+) site is built by His62, His70, His79, and Asp82. His119 serves as a coordination point for Cu cation.

This sequence belongs to the Cu-Zn superoxide dismutase family. In terms of assembly, homodimer. The cofactor is Cu cation. Zn(2+) is required as a cofactor.

It localises to the cytoplasm. It carries out the reaction 2 superoxide + 2 H(+) = H2O2 + O2. Functionally, destroys radicals which are normally produced within the cells and which are toxic to biological systems. In Drosophila virilis (Fruit fly), this protein is Superoxide dismutase [Cu-Zn].